The sequence spans 189 residues: Large ribosomal subunit protein bL12c (189 aa).

Disordered regions lie at residues 1–30 (MAATTTMATLNLPSLTSHPNSSTFPKHPQP) and 165–189 (EGVSKDDAEDAKKQLEDAGAKVSIV). A chloroplast-targeting transit peptide spans 1–56 (MAATTTMATLNLPSLTSHPNSSTFPKHPQPLQFPFRTTTNPISLSSTRTTRLRPIA). Over residues 11–24 (NLPSLTSHPNSSTF) the composition is skewed to polar residues. A compositionally biased stretch (basic and acidic residues) spans 165–183 (EGVSKDDAEDAKKQLEDAG).

In terms of assembly, component of the chloroplast large ribosomal subunit (LSU). Mature 70S chloroplast ribosomes of higher plants consist of a small (30S) and a large (50S) subunit. The 30S small subunit contains 1 molecule of ribosomal RNA (16S rRNA) and 24 different proteins. The 50S large subunit contains 3 rRNA molecules (23S, 5S and 4.5S rRNA) and 33 different proteins.

Its subcellular location is the plastid. The protein resides in the chloroplast. Its function is as follows. Component of the chloroplast ribosome (chloro-ribosome), a dedicated translation machinery responsible for the synthesis of chloroplast genome-encoded proteins, including proteins of the transcription and translation machinery and components of the photosynthetic apparatus. This is Large ribosomal subunit protein bL12c (RPL12) from Spinacia oleracea (Spinach).